The chain runs to 219 residues: Counting factor-associated protein C (219 aa).

Residues 1–16 (MKVLILLVSLISVCFS) form the signal peptide. 2 N-linked (GlcNAc...) asparagine glycosylation sites follow: asparagine 74 and asparagine 123.

The protein resides in the secreted. The polypeptide is Counting factor-associated protein C (cfaC) (Dictyostelium discoideum (Social amoeba)).